Consider the following 102-residue polypeptide: Large ribosomal subunit protein bL21 (102 aa).

The protein belongs to the bacterial ribosomal protein bL21 family. Part of the 50S ribosomal subunit. Contacts protein L20.

This protein binds to 23S rRNA in the presence of protein L20. The polypeptide is Large ribosomal subunit protein bL21 (Trichlorobacter lovleyi (strain ATCC BAA-1151 / DSM 17278 / SZ) (Geobacter lovleyi)).